The sequence spans 622 residues: DNA-directed RNA polymerase subunit gamma (622 aa).

Zn(2+) is bound by residues Cys70, Cys72, Cys85, and Cys88. Asp466, Asp468, and Asp470 together coordinate Mg(2+).

It belongs to the RNA polymerase beta' chain family. RpoC1 subfamily. In terms of assembly, in cyanobacteria the RNAP catalytic core is composed of 2 alpha, 1 beta, 1 beta', 1 gamma and 1 omega subunit. When a sigma factor is associated with the core the holoenzyme is formed, which can initiate transcription. The cofactor is Mg(2+). Requires Zn(2+) as cofactor.

It carries out the reaction RNA(n) + a ribonucleoside 5'-triphosphate = RNA(n+1) + diphosphate. In terms of biological role, DNA-dependent RNA polymerase catalyzes the transcription of DNA into RNA using the four ribonucleoside triphosphates as substrates. The chain is DNA-directed RNA polymerase subunit gamma from Cyanothece sp. (strain PCC 7425 / ATCC 29141).